The following is a 357-amino-acid chain: 3-isopropylmalate dehydrogenase (357 aa).

76-89 (GPQWDTIDPSLRPE) lines the NAD(+) pocket. Substrate contacts are provided by Arg-96, Arg-106, Arg-134, and Asp-224. Residues Asp-224, Asp-248, and Asp-252 each coordinate Mg(2+). 282-294 (GSAPDIAGKGIAN) serves as a coordination point for NAD(+).

Belongs to the isocitrate and isopropylmalate dehydrogenases family. LeuB type 1 subfamily. As to quaternary structure, homodimer. Mg(2+) serves as cofactor. It depends on Mn(2+) as a cofactor.

The protein localises to the cytoplasm. It catalyses the reaction (2R,3S)-3-isopropylmalate + NAD(+) = 4-methyl-2-oxopentanoate + CO2 + NADH. Its pathway is amino-acid biosynthesis; L-leucine biosynthesis; L-leucine from 3-methyl-2-oxobutanoate: step 3/4. Its function is as follows. Catalyzes the oxidation of 3-carboxy-2-hydroxy-4-methylpentanoate (3-isopropylmalate) to 3-carboxy-4-methyl-2-oxopentanoate. The product decarboxylates to 4-methyl-2 oxopentanoate. This is 3-isopropylmalate dehydrogenase from Xanthomonas euvesicatoria pv. vesicatoria (strain 85-10) (Xanthomonas campestris pv. vesicatoria).